An 81-amino-acid polypeptide reads, in one-letter code: Cytochrome b559 subunit alpha (81 aa).

Residues 21–35 (VIHALTIPALFLAGW) traverse the membrane as a helical segment. Residue H23 coordinates heme.

The protein belongs to the PsbE/PsbF family. Heterodimer of an alpha subunit and a beta subunit. PSII is composed of 1 copy each of membrane proteins PsbA, PsbB, PsbC, PsbD, PsbE, PsbF, PsbH, PsbI, PsbJ, PsbK, PsbL, PsbM, PsbT, PsbX, PsbY, PsbZ, Psb30/Ycf12, peripheral proteins PsbO, CyanoQ (PsbQ), PsbU, PsbV and a large number of cofactors. It forms dimeric complexes. Heme b is required as a cofactor.

It localises to the cellular thylakoid membrane. Functionally, this b-type cytochrome is tightly associated with the reaction center of photosystem II (PSII). PSII is a light-driven water:plastoquinone oxidoreductase that uses light energy to abstract electrons from H(2)O, generating O(2) and a proton gradient subsequently used for ATP formation. It consists of a core antenna complex that captures photons, and an electron transfer chain that converts photonic excitation into a charge separation. The protein is Cytochrome b559 subunit alpha of Synechococcus sp. (strain JA-3-3Ab) (Cyanobacteria bacterium Yellowstone A-Prime).